The chain runs to 262 residues: Aconitate isomerase (262 aa).

The first 22 residues, 1 to 22, serve as a signal peptide directing secretion; the sequence is MFPRLPTLALGALLLASTPLLA.

As to quaternary structure, monomer.

It catalyses the reaction trans-aconitate = cis-aconitate. Activated more than 1.5 fold by Ca(2+), Mg(2+), Mn(2+), Ni(2+), Fe(2+), DDT and 1,10-phenanthroline. Strongly inhibited by Ag(+) and Hg(+). Inhibited by addition of 20% (v/v) glycerol. No effect by addition of NADH or NADPH. Functionally, involved in assimilation of trans-aconitic acid. Preference for cis-aconitic acid is 14-fold higher than for trans-aconitic acid. Not active on intermediates of tricarboxylic acid (TCA) cycle including citric acid, succinic acid, fumaric acid, and 2-oxoglutaric acid or on other dicarboxilic acids including itaconic acid, formic acid, citraconic acid or maleic acid. The sequence is that of Aconitate isomerase from Pseudomonas sp.